The chain runs to 562 residues: Gut esterase 1 (562 aa).

The first 16 residues, 1–16 (MRVLLASLLIFGACWA), serve as a signal peptide directing secretion. A disulfide bridge connects residues Cys-75 and Cys-93. Ser-199 serves as the catalytic Acyl-ester intermediate. An intrachain disulfide couples Cys-251 to Cys-259. Active-site charge relay system residues include Glu-320 and His-451. The short motif at 559 to 562 (KDEL) is the Prevents secretion from ER element.

Belongs to the type-B carboxylesterase/lipase family. As to expression, expressed only in the intestine.

Its subcellular location is the endoplasmic reticulum lumen. The enzyme catalyses a carboxylic ester + H2O = an alcohol + a carboxylate + H(+). This chain is Gut esterase 1 (ges-1), found in Caenorhabditis briggsae.